The primary structure comprises 460 residues: Chromosomal replication initiator protein DnaA (460 aa).

Residues 1 to 84 (MAVSLWQQCI…RFDIGSRPSA (84 aa)) are domain I, interacts with DnaA modulators. The interval 84 to 123 (AKKPEPAPVAAVRVPNPQTKASVGTSFNTTEPVANTNHRS) is domain II. The disordered stretch occupies residues 103–123 (KASVGTSFNTTEPVANTNHRS). The interval 124 to 340 (NINPTYQFDN…GALNRVIANA (217 aa)) is domain III, AAA+ region. Residues Gly168, Gly170, Lys171, and Thr172 each coordinate ATP. The domain IV, binds dsDNA stretch occupies residues 341-460 (NFTGRPITID…YANLIRTLSS (120 aa)).

It belongs to the DnaA family. In terms of assembly, oligomerizes as a right-handed, spiral filament on DNA at oriC.

It is found in the cytoplasm. Functionally, plays an essential role in the initiation and regulation of chromosomal replication. ATP-DnaA binds to the origin of replication (oriC) to initiate formation of the DNA replication initiation complex once per cell cycle. Binds the DnaA box (a 9 base pair repeat at the origin) and separates the double-stranded (ds)DNA. Forms a right-handed helical filament on oriC DNA; dsDNA binds to the exterior of the filament while single-stranded (ss)DNA is stabiized in the filament's interior. The ATP-DnaA-oriC complex binds and stabilizes one strand of the AT-rich DNA unwinding element (DUE), permitting loading of DNA polymerase. After initiation quickly degrades to an ADP-DnaA complex that is not apt for DNA replication. Binds acidic phospholipids. In Shewanella sp. (strain MR-4), this protein is Chromosomal replication initiator protein DnaA.